A 430-amino-acid polypeptide reads, in one-letter code: Adenylosuccinate synthetase (430 aa).

GTP is bound by residues 13–19 (GDEGKGK) and 41–43 (GHT). Catalysis depends on aspartate 14, which acts as the Proton acceptor. Aspartate 14 and glycine 41 together coordinate Mg(2+). IMP contacts are provided by residues 14–17 (DEGK), 39–42 (NAGH), threonine 130, arginine 144, glutamine 225, threonine 240, and arginine 304. Catalysis depends on histidine 42, which acts as the Proton donor. 300–306 (STTGRAR) provides a ligand contact to substrate. Residues arginine 306, 332 to 334 (KLD), and 414 to 416 (STG) contribute to the GTP site.

Belongs to the adenylosuccinate synthetase family. Homodimer. Requires Mg(2+) as cofactor.

It is found in the cytoplasm. It catalyses the reaction IMP + L-aspartate + GTP = N(6)-(1,2-dicarboxyethyl)-AMP + GDP + phosphate + 2 H(+). The protein operates within purine metabolism; AMP biosynthesis via de novo pathway; AMP from IMP: step 1/2. In terms of biological role, plays an important role in the de novo pathway of purine nucleotide biosynthesis. Catalyzes the first committed step in the biosynthesis of AMP from IMP. In Pseudomonas putida (strain W619), this protein is Adenylosuccinate synthetase.